A 286-amino-acid chain; its full sequence is Acetylglutamate kinase (286 aa).

Residues 70–71, Arg-92, and Asn-184 each bind substrate; that span reads GG.

Belongs to the acetylglutamate kinase family. ArgB subfamily.

It localises to the cytoplasm. The catalysed reaction is N-acetyl-L-glutamate + ATP = N-acetyl-L-glutamyl 5-phosphate + ADP. It functions in the pathway amino-acid biosynthesis; L-arginine biosynthesis; N(2)-acetyl-L-ornithine from L-glutamate: step 2/4. In terms of biological role, catalyzes the ATP-dependent phosphorylation of N-acetyl-L-glutamate. The sequence is that of Acetylglutamate kinase from Ruegeria sp. (strain TM1040) (Silicibacter sp.).